The following is a 718-amino-acid chain: Methionine--tRNA ligase (718 aa).

The 'HIGH' region signature appears at 27–37 (PYANGQIHIGH). The Zn(2+) site is built by C158, C161, C171, and C174. The 'KMSKS' region signature appears at 348 to 352 (KMSKS). K351 contacts ATP. The region spanning 612–718 (DFAKIDLRIA…SGAKPGMRVK (107 aa)) is the tRNA-binding domain.

This sequence belongs to the class-I aminoacyl-tRNA synthetase family. MetG type 1 subfamily. As to quaternary structure, homodimer. Requires Zn(2+) as cofactor.

It is found in the cytoplasm. The catalysed reaction is tRNA(Met) + L-methionine + ATP = L-methionyl-tRNA(Met) + AMP + diphosphate. In terms of biological role, is required not only for elongation of protein synthesis but also for the initiation of all mRNA translation through initiator tRNA(fMet) aminoacylation. The sequence is that of Methionine--tRNA ligase from Burkholderia orbicola (strain AU 1054).